A 310-amino-acid chain; its full sequence is ATP phosphoribosyltransferase (310 aa).

The protein belongs to the ATP phosphoribosyltransferase family.

It is found in the cytoplasm. It carries out the reaction 1-(5-phospho-beta-D-ribosyl)-ATP + diphosphate = 5-phospho-alpha-D-ribose 1-diphosphate + ATP. Its pathway is amino-acid biosynthesis; L-histidine biosynthesis; L-histidine from 5-phospho-alpha-D-ribose 1-diphosphate: step 1/9. Functionally, catalyzes the condensation of ATP and 5-phosphoribose 1-diphosphate to form N'-(5'-phosphoribosyl)-ATP (PR-ATP). Has a crucial role in the pathway because the rate of histidine biosynthesis seems to be controlled primarily by regulation of HisG enzymatic activity. This is ATP phosphoribosyltransferase (his1) from Schizosaccharomyces pombe (strain 972 / ATCC 24843) (Fission yeast).